The following is a 426-amino-acid chain: Methylamine dehydrogenase heavy chain (426 aa).

Positions 1–31 are cleaved as a signal peptide; the sequence is MASARESTPRYLTLIGATLACSALALGAAQA. Residues 32–64 form a disordered region; the sequence is QTEPAEPEAPAETAAADAAGQTEGQRGAAEAAA. A disulfide bridge links cysteine 221 with cysteine 236.

This sequence belongs to the aromatic amine dehydrogenase heavy chain family. Tetramer of two light and two heavy chains.

It is found in the periplasm. The catalysed reaction is 2 oxidized [amicyanin] + methylamine + H2O = 2 reduced [amicyanin] + formaldehyde + NH4(+) + 2 H(+). Methylamine dehydrogenase carries out the oxidation of methylamine. Electrons are passed from methylamine dehydrogenase to amicyanin. This is Methylamine dehydrogenase heavy chain (mauB) from Paracoccus versutus (Thiobacillus versutus).